A 687-amino-acid polypeptide reads, in one-letter code: Protein-glutamine gamma-glutamyltransferase 2 (687 aa).

Position 2 is an N-acetylalanine (Ala-2). Ser-60 bears the Phosphoserine mark. Intrachain disulfides connect Cys-230-Cys-370 and Cys-370-Cys-371. Catalysis depends on residues Cys-277, His-335, and Asp-358. Ca(2+)-binding residues include Asn-398, Asp-400, Glu-437, Glu-447, and Glu-452. Lys-468 carries the N6-acetyllysine modification. 476–483 (RIRVGQSM) provides a ligand contact to GTP. Glu-539 contacts Ca(2+). 580 to 583 (RDLY) is a GTP binding site. An Isoglutamyl lysine isopeptide (Gln-Lys) (interchain with K-?) cross-link involves residue Gln-633.

Belongs to the transglutaminase superfamily. Transglutaminase family. Monomer. Interacts with phospholipase C; promoting alpha-1 adrenergic receptor signaling. Interacts with PLCD1. In terms of assembly, homooligomer. Requires Ca(2+) as cofactor. Disulfide bond formation inactivates the calcium-dependent acyltransferase activity. Cys-370 can form disulfide bonds with both Cys-230 and Cys-371: formation of a disulfide bond between Cys-230 and Cys-370 facilitates formation of the disulfide between Cys-370 and Cys-371, which promotes inactivation of the acyltransferase activity. May also form interchain disulfids between Cys-230 and Cys-370. Ca(2+) protects against disulfide bond formation and inactivation. In terms of processing, auto-transglutaminated: Forms covalent cross-links mediated by transglutaminase between Gln-633 and the epsilon-amino group of a lysine residue of itself or HMGB1, forming homopolymers and heteropolymers, respectively. Post-translationally, S-nitrosylated, leading to inactivation of the acyltransferase activity.

It localises to the cytoplasm. The protein resides in the cytosol. Its subcellular location is the nucleus. The protein localises to the chromosome. It is found in the secreted. It localises to the extracellular space. The protein resides in the extracellular matrix. Its subcellular location is the cell membrane. The protein localises to the mitochondrion. It is found in the perinuclear region. The catalysed reaction is L-glutaminyl-[protein] + L-lysyl-[protein] = [protein]-L-lysyl-N(6)-5-L-glutamyl-[protein] + NH4(+). It catalyses the reaction L-glutaminyl-[protein] + serotonin = 5-serotonyl-L-glutamyl-[protein] + NH4(+). The enzyme catalyses L-glutaminyl-[protein] + dopamine = 5-dopaminyl-L-glutamyl-[protein] + NH4(+). It carries out the reaction L-glutaminyl-[protein] + histamine = 5-histaminyl-L-glutamyl-[protein] + NH4(+). The catalysed reaction is L-glutaminyl-[protein] + (R)-noradrenaline = 5-(R)-noradrenalinyl-L-glutamyl-[protein] + NH4(+). It catalyses the reaction L-glutaminyl-[protein] + H2O = L-glutamyl-[protein] + NH4(+). Its activity is regulated as follows. Acyltransferase activity is regulated by the binding of GTP and Ca(2+): inactivated by GTP, which stabilizes its closed structure, thereby obstructing the accessibility of substrates to the active sites. In contrast, Ca(2+) acts as a cofactor by inducing conformational change to the active open form. In absence of Ca(2+), Mg(2+) may bind Ca(2+)-binding sites, promoting GTP-binding and subsequent inhibition of the acyltransferase activity. Extracellularly reduced and activated by CLIC3. Specifically inhibited by compound VA4 ((S)-Benzyl (6-Acrylamido-1-(4-((5-(dimethylamino)naphthalen-1-yl)sulfonyl)piperazin-1-yl)-1-oxohexan-2-yl)carbamate), which specifically abolishes both the transamidation and GTP-binding activities. Calcium-dependent acyltransferase that catalyzes the formation of covalent bonds between peptide-bound glutamine and various primary amines, such as gamma-amino group of peptide-bound lysine, or mono- and polyamines, thereby producing cross-linked or aminated proteins, respectively. Involved in many biological processes, such as bone development, angiogenesis, wound healing, cellular differentiation, chromatin modification and apoptosis. Acts as a protein-glutamine gamma-glutamyltransferase by mediating the cross-linking of proteins, such as ACO2, HSPB6, FN1, HMGB1, RAP1GDS1, SLC25A4/ANT1, SPP1 and WDR54. Under physiological conditions, the protein cross-linking activity is inhibited by GTP; inhibition is relieved by Ca(2+) in response to various stresses. When secreted, catalyzes cross-linking of proteins of the extracellular matrix, such as FN1 and SPP1 resulting in the formation of scaffolds. Plays a key role during apoptosis, both by (1) promoting the cross-linking of cytoskeletal proteins resulting in condensation of the cytoplasm, and by (2) mediating cross-linking proteins of the extracellular matrix, resulting in the irreversible formation of scaffolds that stabilize the integrity of the dying cells before their clearance by phagocytosis, thereby preventing the leakage of harmful intracellular components. In addition to protein cross-linking, can use different monoamine substrates to catalyze a vast array of protein post-translational modifications: mediates aminylation of serotonin, dopamine, noradrenaline or histamine into glutamine residues of target proteins to generate protein serotonylation, dopaminylation, noradrenalinylation or histaminylation, respectively. Mediates protein serotonylation of small GTPases during activation and aggregation of platelets, leading to constitutive activation of these GTPases. Plays a key role in chromatin organization by mediating serotonylation and dopaminylation of histone H3. Catalyzes serotonylation of 'Gln-5' of histone H3 (H3Q5ser) during serotonergic neuron differentiation, thereby facilitating transcription. Acts as a mediator of neurotransmission-independent role of nuclear dopamine in ventral tegmental area (VTA) neurons: catalyzes dopaminylation of 'Gln-5' of histone H3 (H3Q5dop), thereby regulating relapse-related transcriptional plasticity in the reward system. Regulates vein remodeling by mediating serotonylation and subsequent inactivation of ATP2A2/SERCA2. Also acts as a protein deamidase by mediating the side chain deamidation of specific glutamine residues of proteins to glutamate. Catalyzes specific deamidation of protein gliadin, a component of wheat gluten in the diet. May also act as an isopeptidase cleaving the previously formed cross-links. Also able to participate in signaling pathways independently of its acyltransferase activity: acts as a signal transducer in alpha-1 adrenergic receptor-mediated stimulation of phospholipase C-delta (PLCD) activity and is required for coupling alpha-1 adrenergic agonists to the stimulation of phosphoinositide lipid metabolism. Functionally, has cytotoxic activity: is able to induce apoptosis independently of its acyltransferase activity. This chain is Protein-glutamine gamma-glutamyltransferase 2, found in Homo sapiens (Human).